The chain runs to 265 residues: Undecaprenyl-diphosphatase (265 aa).

7 consecutive transmembrane segments (helical) span residues Ser-38–Trp-58, Leu-80–Glu-100, Pro-107–Ala-127, Ile-135–Gly-155, Thr-178–Leu-198, Ile-216–Ile-236, and Phe-244–Ile-264.

The protein belongs to the UppP family.

The protein resides in the cell inner membrane. It catalyses the reaction di-trans,octa-cis-undecaprenyl diphosphate + H2O = di-trans,octa-cis-undecaprenyl phosphate + phosphate + H(+). Its function is as follows. Catalyzes the dephosphorylation of undecaprenyl diphosphate (UPP). Confers resistance to bacitracin. The protein is Undecaprenyl-diphosphatase of Rhizobium johnstonii (strain DSM 114642 / LMG 32736 / 3841) (Rhizobium leguminosarum bv. viciae).